The chain runs to 123 residues: uncharacterized protein (123 aa).

The tract at residues 17–74 (FQKKKKTGSQTRRTLKPQPQQLQQNLPKGHETTGHTYERVLQQQGSQERSPGLMSEDS) is disordered. T30 carries the post-translational modification Phosphothreonine. Residues 32–43 (KPQPQQLQQNLP) show a composition bias toward low complexity. Positions 44–54 (KGHETTGHTYE) are enriched in basic and acidic residues. Position 62 is a phosphoserine (S62).

This is an uncharacterized protein from Homo sapiens (Human).